Here is a 242-residue protein sequence, read N- to C-terminus: Ditrans,polycis-undecaprenyl-diphosphate synthase ((2E,6E)-farnesyl-diphosphate specific) (242 aa).

The active site involves aspartate 21. Aspartate 21 is a Mg(2+) binding site. Residues 22–25 (GNGR), tryptophan 26, arginine 34, histidine 38, and 66–68 (SSE) contribute to the substrate site. Asparagine 69 functions as the Proton acceptor in the catalytic mechanism. Substrate-binding positions include tryptophan 70, arginine 72, arginine 189, and 195–197 (RIS). Position 208 (glutamate 208) interacts with Mg(2+).

The protein belongs to the UPP synthase family. As to quaternary structure, homodimer. Mg(2+) serves as cofactor.

The enzyme catalyses 8 isopentenyl diphosphate + (2E,6E)-farnesyl diphosphate = di-trans,octa-cis-undecaprenyl diphosphate + 8 diphosphate. In terms of biological role, catalyzes the sequential condensation of isopentenyl diphosphate (IPP) with (2E,6E)-farnesyl diphosphate (E,E-FPP) to yield (2Z,6Z,10Z,14Z,18Z,22Z,26Z,30Z,34E,38E)-undecaprenyl diphosphate (di-trans,octa-cis-UPP). UPP is the precursor of glycosyl carrier lipid in the biosynthesis of bacterial cell wall polysaccharide components such as peptidoglycan and lipopolysaccharide. The protein is Ditrans,polycis-undecaprenyl-diphosphate synthase ((2E,6E)-farnesyl-diphosphate specific) of Haemophilus ducreyi (strain 35000HP / ATCC 700724).